A 159-amino-acid polypeptide reads, in one-letter code: NAD(P)H-quinone oxidoreductase subunit I, chloroplastic (159 aa).

2 4Fe-4S ferredoxin-type domains span residues 55 to 84 (GRIH…VDWN) and 95 to 124 (KNYS…MTEE). Residues C64, C67, C70, C74, C104, C107, C110, and C114 each coordinate [4Fe-4S] cluster.

Belongs to the complex I 23 kDa subunit family. In terms of assembly, NDH is composed of at least 16 different subunits, 5 of which are encoded in the nucleus. Requires [4Fe-4S] cluster as cofactor.

Its subcellular location is the plastid. The protein localises to the chloroplast thylakoid membrane. It catalyses the reaction a plastoquinone + NADH + (n+1) H(+)(in) = a plastoquinol + NAD(+) + n H(+)(out). The catalysed reaction is a plastoquinone + NADPH + (n+1) H(+)(in) = a plastoquinol + NADP(+) + n H(+)(out). In terms of biological role, NDH shuttles electrons from NAD(P)H:plastoquinone, via FMN and iron-sulfur (Fe-S) centers, to quinones in the photosynthetic chain and possibly in a chloroplast respiratory chain. The immediate electron acceptor for the enzyme in this species is believed to be plastoquinone. Couples the redox reaction to proton translocation, and thus conserves the redox energy in a proton gradient. This is NAD(P)H-quinone oxidoreductase subunit I, chloroplastic from Chara vulgaris (Common stonewort).